The chain runs to 235 residues: Purine nucleoside phosphorylase DeoD-type (235 aa).

An a purine D-ribonucleoside-binding site is contributed by His4. Phosphate contacts are provided by residues Gly20, Arg24, Arg43, and 87–90 (RVGT). A purine D-ribonucleoside-binding positions include Glu162, 179-181 (EME), and 203-204 (SD). Asp204 acts as the Proton donor in catalysis.

It belongs to the PNP/UDP phosphorylase family. As to quaternary structure, homohexamer; trimer of homodimers.

The catalysed reaction is a purine D-ribonucleoside + phosphate = a purine nucleobase + alpha-D-ribose 1-phosphate. The enzyme catalyses a purine 2'-deoxy-D-ribonucleoside + phosphate = a purine nucleobase + 2-deoxy-alpha-D-ribose 1-phosphate. In terms of biological role, catalyzes the reversible phosphorolytic breakdown of the N-glycosidic bond in the beta-(deoxy)ribonucleoside molecules, with the formation of the corresponding free purine bases and pentose-1-phosphate. This Bacillus anthracis (strain CDC 684 / NRRL 3495) protein is Purine nucleoside phosphorylase DeoD-type.